We begin with the raw amino-acid sequence, 412 residues long: Tyrosine--tRNA ligase (412 aa).

Tyr-31 is an L-tyrosine binding site. Positions 36–45 match the 'HIGH' region motif; the sequence is PTAPSLHIGH. Residues Tyr-162 and Gln-166 each coordinate L-tyrosine. Residues 222–226 carry the 'KMSKS' region motif; sequence KIGKT. Residue Lys-225 coordinates ATP. The S4 RNA-binding domain occupies 345–411; sequence KRWLDIVVEL…GKRKKQVIDL (67 aa).

The protein belongs to the class-I aminoacyl-tRNA synthetase family. TyrS type 1 subfamily. As to quaternary structure, homodimer.

The protein resides in the cytoplasm. The catalysed reaction is tRNA(Tyr) + L-tyrosine + ATP = L-tyrosyl-tRNA(Tyr) + AMP + diphosphate + H(+). Functionally, catalyzes the attachment of tyrosine to tRNA(Tyr) in a two-step reaction: tyrosine is first activated by ATP to form Tyr-AMP and then transferred to the acceptor end of tRNA(Tyr). The chain is Tyrosine--tRNA ligase from Chlamydia trachomatis serovar L2 (strain ATCC VR-902B / DSM 19102 / 434/Bu).